The following is a 432-amino-acid chain: MGVNDFAIERVWGLQVLDSRGNPTVKAYVKLAGGSLGWGIAPSGASRGEREAVELRDGGGKWRGKGVSRAVSLLNTVVAPRLEGVDARRQAQIDRLLIELDGTPNKSRLGGNTTTALSIAVSRAAAAQARLELFQYLGGAGARRLPIPLLNVINGGVHAGNELDFQEFMIIPYGFESFTEAMRAAVETYGELKSLLKDRYGASAVNVGDEGGFAPPMRSAEEALKTLVDAVEKAGYQPGSEIALGIDAAASQLYSNGRYSVEGKSLSREELLSLYQRLVEQYPIVYLEDPFSEDDYEGFKAAVDALSTETIIVGDDLLVTNPQRVKEASALKAVTGLLVKVNQVGTLTEALEAIQAARDRGIVHIVSHRSGDTEDTFIADLAVATEALMIKTGAPARGERTSKYNRLLEIENILGYSAEYAGPELRGVMGRR.

(2R)-2-phosphoglycerate is bound at residue Q166. The active-site Proton donor is the E210. Mg(2+) contacts are provided by D247, E288, and D315. (2R)-2-phosphoglycerate-binding residues include K340, R369, S370, and K391. The active-site Proton acceptor is the K340.

The protein belongs to the enolase family. The cofactor is Mg(2+).

It is found in the cytoplasm. Its subcellular location is the secreted. The protein resides in the cell surface. The catalysed reaction is (2R)-2-phosphoglycerate = phosphoenolpyruvate + H2O. The protein operates within carbohydrate degradation; glycolysis; pyruvate from D-glyceraldehyde 3-phosphate: step 4/5. Catalyzes the reversible conversion of 2-phosphoglycerate (2-PG) into phosphoenolpyruvate (PEP). It is essential for the degradation of carbohydrates via glycolysis. The polypeptide is Enolase (Aeropyrum pernix (strain ATCC 700893 / DSM 11879 / JCM 9820 / NBRC 100138 / K1)).